The chain runs to 215 residues: ATP-dependent Clp protease proteolytic subunit 1 (215 aa).

Ser108 acts as the Nucleophile in catalysis. His133 is an active-site residue.

This sequence belongs to the peptidase S14 family. Fourteen ClpP subunits assemble into 2 heptameric rings which stack back to back to give a disk-like structure with a central cavity, resembling the structure of eukaryotic proteasomes.

The protein localises to the cytoplasm. The catalysed reaction is Hydrolysis of proteins to small peptides in the presence of ATP and magnesium. alpha-casein is the usual test substrate. In the absence of ATP, only oligopeptides shorter than five residues are hydrolyzed (such as succinyl-Leu-Tyr-|-NHMec, and Leu-Tyr-Leu-|-Tyr-Trp, in which cleavage of the -Tyr-|-Leu- and -Tyr-|-Trp bonds also occurs).. Cleaves peptides in various proteins in a process that requires ATP hydrolysis. Has a chymotrypsin-like activity. Plays a major role in the degradation of misfolded proteins. This Paraburkholderia xenovorans (strain LB400) protein is ATP-dependent Clp protease proteolytic subunit 1.